The chain runs to 387 residues: Succinyl-diaminopimelate desuccinylase (387 aa).

Histidine 73 lines the Zn(2+) pocket. The active site involves aspartate 75. Aspartate 106 provides a ligand contact to Zn(2+). Catalysis depends on glutamate 141, which acts as the Proton acceptor. Positions 142, 170, and 359 each coordinate Zn(2+).

This sequence belongs to the peptidase M20A family. DapE subfamily. In terms of assembly, homodimer. Requires Zn(2+) as cofactor. The cofactor is Co(2+).

The catalysed reaction is N-succinyl-(2S,6S)-2,6-diaminopimelate + H2O = (2S,6S)-2,6-diaminopimelate + succinate. Its pathway is amino-acid biosynthesis; L-lysine biosynthesis via DAP pathway; LL-2,6-diaminopimelate from (S)-tetrahydrodipicolinate (succinylase route): step 3/3. Catalyzes the hydrolysis of N-succinyl-L,L-diaminopimelic acid (SDAP), forming succinate and LL-2,6-diaminopimelate (DAP), an intermediate involved in the bacterial biosynthesis of lysine and meso-diaminopimelic acid, an essential component of bacterial cell walls. This chain is Succinyl-diaminopimelate desuccinylase, found in Methylorubrum populi (strain ATCC BAA-705 / NCIMB 13946 / BJ001) (Methylobacterium populi).